The chain runs to 303 residues: tRNA pseudouridine synthase B (303 aa).

The Nucleophile role is filled by Asp53.

It belongs to the pseudouridine synthase TruB family. Type 1 subfamily.

It catalyses the reaction uridine(55) in tRNA = pseudouridine(55) in tRNA. Responsible for synthesis of pseudouridine from uracil-55 in the psi GC loop of transfer RNAs. The sequence is that of tRNA pseudouridine synthase B from Zymomonas mobilis subsp. mobilis (strain ATCC 31821 / ZM4 / CP4).